We begin with the raw amino-acid sequence, 172 residues long: Adenine phosphoribosyltransferase (172 aa).

The protein belongs to the purine/pyrimidine phosphoribosyltransferase family. In terms of assembly, homodimer.

The protein localises to the cytoplasm. It catalyses the reaction AMP + diphosphate = 5-phospho-alpha-D-ribose 1-diphosphate + adenine. It functions in the pathway purine metabolism; AMP biosynthesis via salvage pathway; AMP from adenine: step 1/1. Its function is as follows. Catalyzes a salvage reaction resulting in the formation of AMP, that is energically less costly than de novo synthesis. The sequence is that of Adenine phosphoribosyltransferase from Clostridium botulinum (strain Alaska E43 / Type E3).